The primary structure comprises 60 residues: Large ribosomal subunit protein bL32 (60 aa).

The protein belongs to the bacterial ribosomal protein bL32 family.

In Synechococcus sp. (strain JA-3-3Ab) (Cyanobacteria bacterium Yellowstone A-Prime), this protein is Large ribosomal subunit protein bL32.